The chain runs to 195 residues: Interferon tau-11 (195 aa).

An N-terminal signal peptide occupies residues 1 to 23; sequence MAFVLSLLMALVLVSYGPGGSLG. 2 cysteine pairs are disulfide-bonded: cysteine 24-cysteine 122 and cysteine 52-cysteine 162. Asparagine 101 carries an N-linked (GlcNAc...) asparagine glycan.

Belongs to the alpha/beta interferon family. IFN-alphaII subfamily. In terms of tissue distribution, constitutively and exclusively expressed in the mononuclear cells of the extraembryonic trophectoderm.

It localises to the secreted. Paracrine hormone primarily responsible for maternal recognition of pregnancy. Interacts with endometrial receptors, probably type I interferon receptors, and blocks estrogen receptor expression, preventing the estrogen-induced increase in oxytocin receptor expression in the endometrium. This results in the suppression of the pulsatile endometrial release of the luteolytic hormone prostaglandin F2-alpha, hindering the regression of the corpus luteum (luteolysis) and therefore a return to ovarian cyclicity. This, and a possible direct effect of IFN-tau on prostaglandin synthesis, leads in turn to continued ovarian progesterone secretion, which stimulates the secretion by the endometrium of the nutrients required for the growth of the conceptus. In summary, displays particularly high antiviral and antiproliferative potency concurrently with particular weak cytotoxicity, high antiluteolytic activity and immunomodulatory properties. In contrast with other IFNs, IFN-tau is not virally inducible. This Ovis aries (Sheep) protein is Interferon tau-11 (IFNT11).